We begin with the raw amino-acid sequence, 388 residues long: Succinate--CoA ligase [ADP-forming] subunit beta (388 aa).

The ATP-grasp domain occupies Lys-9–His-244. Residues Lys-46, Gly-53 to Gly-55, Glu-99, Thr-102, and Glu-107 contribute to the ATP site. Mg(2+) contacts are provided by Asn-199 and Asp-213. Substrate contacts are provided by residues Asn-264 and Gly-321–Val-323.

Belongs to the succinate/malate CoA ligase beta subunit family. As to quaternary structure, heterotetramer of two alpha and two beta subunits. Requires Mg(2+) as cofactor.

It catalyses the reaction succinate + ATP + CoA = succinyl-CoA + ADP + phosphate. The catalysed reaction is GTP + succinate + CoA = succinyl-CoA + GDP + phosphate. Its pathway is carbohydrate metabolism; tricarboxylic acid cycle; succinate from succinyl-CoA (ligase route): step 1/1. Its function is as follows. Succinyl-CoA synthetase functions in the citric acid cycle (TCA), coupling the hydrolysis of succinyl-CoA to the synthesis of either ATP or GTP and thus represents the only step of substrate-level phosphorylation in the TCA. The beta subunit provides nucleotide specificity of the enzyme and binds the substrate succinate, while the binding sites for coenzyme A and phosphate are found in the alpha subunit. This chain is Succinate--CoA ligase [ADP-forming] subunit beta, found in Shewanella baltica (strain OS195).